A 156-amino-acid polypeptide reads, in one-letter code: rRNA methyltransferase (156 aa).

In terms of biological role, modifies 16S rRNA so making ribosomes resistant to certain aminoglycosides. In Saccharopolyspora hirsuta, this protein is rRNA methyltransferase (kamC).